The following is a 237-amino-acid chain: Ribosomal RNA small subunit methyltransferase G (237 aa).

S-adenosyl-L-methionine-binding positions include Gly78, Phe83, 129 to 130, and Arg148; that span reads AE.

It belongs to the methyltransferase superfamily. RNA methyltransferase RsmG family.

It localises to the cytoplasm. Functionally, specifically methylates the N7 position of a guanine in 16S rRNA. The polypeptide is Ribosomal RNA small subunit methyltransferase G (Streptococcus equi subsp. equi (strain 4047)).